The following is a 285-amino-acid chain: K88 fimbrial protein AB (285 aa).

The signal sequence occupies residues 1-21 (MKKTLIALAIAASAASGMAHA).

The protein belongs to the fimbrial K88 protein family. As to quaternary structure, K88 fimbria, 0.1-1 micrometer in length and 7 nanometers in diameter, is composed of about 100 identical subunits.

The protein resides in the fimbrium. In terms of biological role, K88 major fimbrial subunit. Fimbriae (also called pili), are polar filaments radiating from the surface of the bacterium to a length of 0.5-1.5 micrometers and numbering 100-300 per cell. They enable bacteria to colonize the epithelium of specific host organs. This Escherichia coli protein is K88 fimbrial protein AB (faeG).